We begin with the raw amino-acid sequence, 1437 residues long: uncharacterized protein (1437 aa).

Positions 1–25 (MRRGCRHHLAAVVLLIATFPPLAYN) are cleaved as a signal peptide. At 26–1326 (QNIGGINQNI…SRIKENYFKW (1301 aa)) the chain is on the extracellular side. N-linked (GlcNAc...) asparagine glycosylation is found at asparagine 103, asparagine 315, asparagine 364, asparagine 492, asparagine 605, asparagine 676, and asparagine 914. An NIDO domain is found at 193-356 (AFFGQQASQA…GRYMFRVDDV (164 aa)). Positions 648-829 (VKEKSREMCH…FRCQMFYWRR (182 aa)) constitute an AMOP domain. The chain crosses the membrane as a helical span at residues 1327 to 1347 (LAVIAGIVGIIIVILLIFLVF). The Cytoplasmic portion of the chain corresponds to 1348–1437 (WCIKRKKLQE…QGMLGLNTSV (90 aa)). Positions 1394 to 1419 (PRTVAMPPPRGTTATPMTLEPRGFSP) are disordered.

It is found in the membrane. This is an uncharacterized protein from Caenorhabditis elegans.